A 155-amino-acid chain; its full sequence is Small ribosomal subunit protein uS7 (155 aa).

Belongs to the universal ribosomal protein uS7 family. As to quaternary structure, part of the 30S ribosomal subunit. Contacts proteins S9 and S11.

In terms of biological role, one of the primary rRNA binding proteins, it binds directly to 16S rRNA where it nucleates assembly of the head domain of the 30S subunit. Is located at the subunit interface close to the decoding center, probably blocks exit of the E-site tRNA. The protein is Small ribosomal subunit protein uS7 of Pelodictyon phaeoclathratiforme (strain DSM 5477 / BU-1).